The following is an 856-amino-acid chain: DNA endonuclease RBBP8 (856 aa).

Positions 25 to 48 are essential for binding to the MRN complex and for RPA focus formation on DNA damage; it reads ELWSKLKECHDKDLQELLMKIGKL. Coiled coils occupy residues 38–87 and 120–141; these read LQEL…EDRL and ITEL…SEQL. Disordered regions lie at residues 143–174 and 423–456; these read DMQK…DSPL and DSEQ…DKEN. Over residues 156 to 168 the composition is skewed to acidic residues; it reads ENPADTGDGEDGV. The interval 493 to 515 is damage-recruitment motif; that stretch reads SSSRTKLTISLVPEKPDTKTILH. The disordered stretch occupies residues 695 to 732; sequence SPSQSISCKERSDIPSIENKKITSEKEHESKGEPYQKQ. Residues 702 to 730 show a composition bias toward basic and acidic residues; it reads CKERSDIPSIENKKITSEKEHESKGEPYQ. Thr806 bears the Phosphothreonine mark. Thr818 is subject to Phosphothreonine; by ATR.

It belongs to the COM1/SAE2/CtIP family. Homotetramer; formed by antiparallel association of helical extensions protruding from the N-termini of two parallel coiled-coil dimers. Interacts with the MRN complex; the interaction links DNA sensing to resection. Interacts with samhd1. In terms of processing, phosphorylation at Thr-818 by atr promotes recruitment to double-strand breaks (DSBs).

It localises to the nucleus. The protein resides in the chromosome. Functionally, endonuclease that cooperates with the MRE11-RAD50-NBN (MRN) complex in DNA-end resection, the first step of double-strand break (DSB) repair through the homologous recombination (HR) pathway. Functions downstream of the MRN complex and ATM, promotes ATR activation and its recruitment to DSBs in the S/G2 phase facilitating the generation of ssDNA. Specifically promotes the endonuclease activity of the MRN complex to clear DNA ends containing protein adducts: recruited to DSBs by nbn following phosphorylation, and promotes the endonuclease of mre11 to clear protein-DNA adducts and generate clean double-strand break ends. The MRN complex and rbbp8/CtIP are also required for chromosome alignment during metaphase. This is DNA endonuclease RBBP8 (rbbp8) from Xenopus laevis (African clawed frog).